The following is a 149-amino-acid chain: Ribosome-binding factor A (149 aa).

The interval 125–149 is disordered; it reads FGSADEVLNEDEGATDDTDDTKGKD. A compositionally biased stretch (acidic residues) spans 131–143; the sequence is VLNEDEGATDDTD.

Belongs to the RbfA family. As to quaternary structure, monomer. Binds 30S ribosomal subunits, but not 50S ribosomal subunits or 70S ribosomes.

It is found in the cytoplasm. Its function is as follows. One of several proteins that assist in the late maturation steps of the functional core of the 30S ribosomal subunit. Associates with free 30S ribosomal subunits (but not with 30S subunits that are part of 70S ribosomes or polysomes). Required for efficient processing of 16S rRNA. May interact with the 5'-terminal helix region of 16S rRNA. In Shewanella sp. (strain W3-18-1), this protein is Ribosome-binding factor A.